Here is a 285-residue protein sequence, read N- to C-terminus: Probable endonuclease 4 (285 aa).

9 residues coordinate Zn(2+): His69, His109, Glu145, Asp179, His182, His216, Asp229, His231, and Glu261.

It belongs to the AP endonuclease 2 family. Zn(2+) is required as a cofactor.

The enzyme catalyses Endonucleolytic cleavage to 5'-phosphooligonucleotide end-products.. In terms of biological role, endonuclease IV plays a role in DNA repair. It cleaves phosphodiester bonds at apurinic or apyrimidinic (AP) sites, generating a 3'-hydroxyl group and a 5'-terminal sugar phosphate. This is Probable endonuclease 4 from Escherichia coli O1:K1 / APEC.